Reading from the N-terminus, the 263-residue chain is Energy-coupling factor transporter transmembrane protein EcfT (263 aa).

The next 4 membrane-spanning stretches (helical) occupy residues 22 to 42 (IIFA…ATNI), 69 to 89 (ILFL…EGAV), 105 to 125 (LAII…LVTL), and 243 to 263 (TGLI…RGGF).

Belongs to the energy-coupling factor EcfT family. As to quaternary structure, forms a stable energy-coupling factor (ECF) transporter complex composed of 2 membrane-embedded substrate-binding proteins (S component), 2 ATP-binding proteins (A component) and 2 transmembrane proteins (T component). May be able to interact with more than 1 S component at a time.

It localises to the cell membrane. Its function is as follows. Transmembrane (T) component of an energy-coupling factor (ECF) ABC-transporter complex. Unlike classic ABC transporters this ECF transporter provides the energy necessary to transport a number of different substrates. This Exiguobacterium sibiricum (strain DSM 17290 / CCUG 55495 / CIP 109462 / JCM 13490 / 255-15) protein is Energy-coupling factor transporter transmembrane protein EcfT.